A 310-amino-acid chain; its full sequence is Signal peptidase I (310 aa).

Residues 5–25 traverse the membrane as a helical segment; that stretch reads LSSFLLASSLITGTLWIINKI. At 26–57 the chain is on the cytoplasmic side; the sequence is LSHNLLDSKIPFNIKKSKIYYKSKQVVQTFAS. Residues 58–78 form a helical membrane-spanning segment; sequence FFPILIIVFIIRTFICEPFQI. At 79–310 the chain is on the extracellular side; sequence PSESMMPTLL…IQFDRIGNIY (232 aa). Residues S82 and K137 contribute to the active site.

It belongs to the peptidase S26 family.

It is found in the cell membrane. The catalysed reaction is Cleavage of hydrophobic, N-terminal signal or leader sequences from secreted and periplasmic proteins.. The chain is Signal peptidase I (lepB) from Buchnera aphidicola subsp. Baizongia pistaciae (strain Bp).